The following is a 292-amino-acid chain: Bis(5'-nucleosyl)-tetraphosphatase, symmetrical (292 aa).

The protein belongs to the Ap4A hydrolase family.

The enzyme catalyses P(1),P(4)-bis(5'-adenosyl) tetraphosphate + H2O = 2 ADP + 2 H(+). Functionally, hydrolyzes diadenosine 5',5'''-P1,P4-tetraphosphate to yield ADP. The sequence is that of Bis(5'-nucleosyl)-tetraphosphatase, symmetrical from Yersinia enterocolitica serotype O:8 / biotype 1B (strain NCTC 13174 / 8081).